Consider the following 58-residue polypeptide: Glutathione reductase (58 aa).

Residues Glu-5, Thr-12, Cys-13, and Lys-21 each contribute to the FAD site. Cysteines 13 and 18 form a disulfide.

It belongs to the class-I pyridine nucleotide-disulfide oxidoreductase family. As to quaternary structure, homodimer. It depends on FAD as a cofactor.

The protein resides in the cytoplasm. The catalysed reaction is 2 glutathione + NADP(+) = glutathione disulfide + NADPH + H(+). In terms of biological role, catalyzes the reduction of glutathione disulfide (GSSG) to reduced glutathione (GSH). Constitutes the major mechanism to maintain a high GSH:GSSG ratio in the cytosol. In Spirulina sp, this protein is Glutathione reductase.